An 82-amino-acid polypeptide reads, in one-letter code: ATP synthase subunit 9, mitochondrial (82 aa).

2 consecutive transmembrane segments (helical) span residues 8–28 (IGAGAATIASAGAAIGIGNVF) and 45–67 (SFGYAILGFALTEAIASFAPMMA).

The protein belongs to the ATPase C chain family. F-type ATPases have 2 components, CF(1) - the catalytic core - and CF(0) - the membrane proton channel. CF(1) has five subunits: alpha(3), beta(3), gamma(1), delta(1), epsilon(1). CF(0) has three main subunits: a, b and c.

The protein localises to the mitochondrion membrane. In terms of biological role, this protein is one of the chains of the nonenzymatic membrane component (F0) of mitochondrial ATPase. The sequence is that of ATP synthase subunit 9, mitochondrial (ATP9) from Malus domestica (Apple).